The primary structure comprises 306 residues: ADP,ATP carrier protein ER-ANT1 (306 aa).

Solcar repeat units lie at residues 8–101, 113–205, and 213–299; these read ERFS…FKNL, KWFA…IKPI, and GNFL…LHQI. The next 5 helical transmembrane spans lie at 10 to 37, 78 to 102, 111 to 131, 181 to 202, and 216 to 236; these read FSADFVMGGAAAIVAKSAAAPIERVKLL, QANVIRYFPTQASNFAFKGYFKNLL, YLKWFAGNVASGSAAGATTSL, FGVSIVGITLYRGMYFGMYDTI, and LASFLLGWSITTSAGVIAYPF. Residues arginine 83 and lysine 95 each coordinate ADP. ADP is bound at residue arginine 240. Residues 240 to 245 form an important for transport activity region; sequence RRRMML. Residues 240-245 carry the Nucleotide carrier signature motif motif; it reads RRRMML. The helical transmembrane segment at 276 to 296 threads the bilayer; sequence VTANMLLGVAGAGVLAGYDQL.

This sequence belongs to the mitochondrial carrier (TC 2.A.29) family.

It localises to the endoplasmic reticulum membrane. The catalysed reaction is ADP(in) + ATP(out) = ADP(out) + ATP(in). Functionally, ADP:ATP antiporter that catalyzes the exchange of ADP and ATP across the endoplasmic reticulum membrane. In Arabidopsis thaliana (Mouse-ear cress), this protein is ADP,ATP carrier protein ER-ANT1 (ER-ANT1).